The primary structure comprises 228 residues: MIGIIGAMEEEVTILKNKLTQLSEISVAHVKFYTGILKDREVVITQSGIGKVNAAISTTLLINKFKPDIIINTGSAGALDESLNVGDVLISDDVKYHDADATAFGYEYGQVPQMPVAFQSSKPLIEKVSQVVQQQQLTAKVGLIVSGDSFIGSVEQRQKIKKAFPNAMAVEMEATAIAQTCYQFNVPFVVVRAVSDLANGEAEMSFEAFLEKAAVSSSQTVEALVSQL.

Glutamate 11 serves as the catalytic Proton acceptor. Substrate-binding positions include glycine 77, isoleucine 151, and 172–173 (ME). Aspartate 196 serves as the catalytic Proton donor.

The protein belongs to the PNP/UDP phosphorylase family. MtnN subfamily.

It catalyses the reaction S-adenosyl-L-homocysteine + H2O = S-(5-deoxy-D-ribos-5-yl)-L-homocysteine + adenine. The catalysed reaction is S-methyl-5'-thioadenosine + H2O = 5-(methylsulfanyl)-D-ribose + adenine. It carries out the reaction 5'-deoxyadenosine + H2O = 5-deoxy-D-ribose + adenine. It functions in the pathway amino-acid biosynthesis; L-methionine biosynthesis via salvage pathway; S-methyl-5-thio-alpha-D-ribose 1-phosphate from S-methyl-5'-thioadenosine (hydrolase route): step 1/2. Catalyzes the irreversible cleavage of the glycosidic bond in both 5'-methylthioadenosine (MTA) and S-adenosylhomocysteine (SAH/AdoHcy) to adenine and the corresponding thioribose, 5'-methylthioribose and S-ribosylhomocysteine, respectively. Also cleaves 5'-deoxyadenosine, a toxic by-product of radical S-adenosylmethionine (SAM) enzymes, into 5-deoxyribose and adenine. The polypeptide is 5'-methylthioadenosine/S-adenosylhomocysteine nucleosidase (Staphylococcus aureus (strain MRSA252)).